A 231-amino-acid polypeptide reads, in one-letter code: Large ribosomal subunit protein uL1 (231 aa).

Belongs to the universal ribosomal protein uL1 family. In terms of assembly, part of the 50S ribosomal subunit.

Its function is as follows. Binds directly to 23S rRNA. The L1 stalk is quite mobile in the ribosome, and is involved in E site tRNA release. Protein L1 is also a translational repressor protein, it controls the translation of the L11 operon by binding to its mRNA. The polypeptide is Large ribosomal subunit protein uL1 (Thioalkalivibrio sulfidiphilus (strain HL-EbGR7)).